Consider the following 155-residue polypeptide: S-ribosylhomocysteine lyase (155 aa).

Positions 57, 61, and 124 each coordinate Fe cation.

Belongs to the LuxS family. As to quaternary structure, homodimer. It depends on Fe cation as a cofactor.

It catalyses the reaction S-(5-deoxy-D-ribos-5-yl)-L-homocysteine = (S)-4,5-dihydroxypentane-2,3-dione + L-homocysteine. Functionally, involved in the synthesis of autoinducer 2 (AI-2) which is secreted by bacteria and is used to communicate both the cell density and the metabolic potential of the environment. The regulation of gene expression in response to changes in cell density is called quorum sensing. Catalyzes the transformation of S-ribosylhomocysteine (RHC) to homocysteine (HC) and 4,5-dihydroxy-2,3-pentadione (DPD). The protein is S-ribosylhomocysteine lyase of Listeria monocytogenes serovar 1/2a (strain ATCC BAA-679 / EGD-e).